Reading from the N-terminus, the 431-residue chain is 4-hydroxy-3-methylbut-2-en-1-yl diphosphate synthase (flavodoxin) (431 aa).

The disordered stretch occupies residues 1–21 (MNKLENPSQRDVAGPSPRHKT). [4Fe-4S] cluster is bound by residues C310, C313, C356, and E363.

This sequence belongs to the IspG family. The cofactor is [4Fe-4S] cluster.

It catalyses the reaction (2E)-4-hydroxy-3-methylbut-2-enyl diphosphate + oxidized [flavodoxin] + H2O + 2 H(+) = 2-C-methyl-D-erythritol 2,4-cyclic diphosphate + reduced [flavodoxin]. The protein operates within isoprenoid biosynthesis; isopentenyl diphosphate biosynthesis via DXP pathway; isopentenyl diphosphate from 1-deoxy-D-xylulose 5-phosphate: step 5/6. Functionally, converts 2C-methyl-D-erythritol 2,4-cyclodiphosphate (ME-2,4cPP) into 1-hydroxy-2-methyl-2-(E)-butenyl 4-diphosphate. This chain is 4-hydroxy-3-methylbut-2-en-1-yl diphosphate synthase (flavodoxin), found in Nitrobacter hamburgensis (strain DSM 10229 / NCIMB 13809 / X14).